A 121-amino-acid polypeptide reads, in one-letter code: U15-barytoxin-Tl1a (121 aa).

A signal peptide spans M1–A17. Cystine bridges form between C56–C74, C67–C80, C71–C119, and C73–C90.

This sequence belongs to the neurotoxin 03 (Tx2) family. 03 subfamily. Expressed by the venom gland.

The protein resides in the secreted. Its function is as follows. Ion channel inhibitor. The protein is U15-barytoxin-Tl1a of Trittame loki (Brush-footed trapdoor spider).